The sequence spans 138 residues: MIEIEINNAQEITSALERLAQATAHRAPLMRSIAGTMESAVAQNFEVGGRPAWKKLKIRQGTPLVDTENLMASITSEYNNNEAIVGTNEPYAAIHQFGGKAGRGRKVAIPARPFLILTPQDEADILEDIQDYFQLLIK.

This sequence to phage Mu protein G.

The sequence is that of Mu-like prophage FluMu G protein 2 from Haemophilus influenzae (strain ATCC 51907 / DSM 11121 / KW20 / Rd).